A 291-amino-acid polypeptide reads, in one-letter code: Nucleotide-binding protein EUBREC_0697 (291 aa).

8–15 (GMSGAGKS) is an ATP binding site. Residue 59–62 (DVRN) coordinates GTP.

It belongs to the RapZ-like family.

Its function is as follows. Displays ATPase and GTPase activities. In Agathobacter rectalis (strain ATCC 33656 / DSM 3377 / JCM 17463 / KCTC 5835 / VPI 0990) (Eubacterium rectale), this protein is Nucleotide-binding protein EUBREC_0697.